A 354-amino-acid chain; its full sequence is UDP-N-acetylglucosamine--N-acetylmuramyl-(pentapeptide) pyrophosphoryl-undecaprenol N-acetylglucosamine transferase (354 aa).

Residues Thr-11 to Gly-13, Arg-164, Ser-194, and Gln-289 contribute to the UDP-N-acetyl-alpha-D-glucosamine site.

The protein belongs to the glycosyltransferase 28 family. MurG subfamily.

The protein resides in the cell membrane. The catalysed reaction is di-trans,octa-cis-undecaprenyl diphospho-N-acetyl-alpha-D-muramoyl-L-alanyl-D-glutamyl-meso-2,6-diaminopimeloyl-D-alanyl-D-alanine + UDP-N-acetyl-alpha-D-glucosamine = di-trans,octa-cis-undecaprenyl diphospho-[N-acetyl-alpha-D-glucosaminyl-(1-&gt;4)]-N-acetyl-alpha-D-muramoyl-L-alanyl-D-glutamyl-meso-2,6-diaminopimeloyl-D-alanyl-D-alanine + UDP + H(+). The protein operates within cell wall biogenesis; peptidoglycan biosynthesis. Cell wall formation. Catalyzes the transfer of a GlcNAc subunit on undecaprenyl-pyrophosphoryl-MurNAc-pentapeptide (lipid intermediate I) to form undecaprenyl-pyrophosphoryl-MurNAc-(pentapeptide)GlcNAc (lipid intermediate II). The chain is UDP-N-acetylglucosamine--N-acetylmuramyl-(pentapeptide) pyrophosphoryl-undecaprenol N-acetylglucosamine transferase from Clostridium botulinum (strain Kyoto / Type A2).